The sequence spans 432 residues: Adenylosuccinate synthetase (432 aa).

GTP is bound by residues Gly-13–Lys-19 and Gly-41–Thr-43. Residue Asp-14 is the Proton acceptor of the active site. Mg(2+) contacts are provided by Asp-14 and Gly-41. Residues Asp-14–Lys-17, Asn-39–His-42, Thr-131, Arg-145, Gln-226, Thr-241, and Arg-305 contribute to the IMP site. Catalysis depends on His-42, which acts as the Proton donor. Ser-301–Arg-307 is a substrate binding site. Residues Arg-307, Lys-333–Asp-335, and Ser-416–Gly-418 each bind GTP.

This sequence belongs to the adenylosuccinate synthetase family. Homodimer. It depends on Mg(2+) as a cofactor.

The protein localises to the cytoplasm. It catalyses the reaction IMP + L-aspartate + GTP = N(6)-(1,2-dicarboxyethyl)-AMP + GDP + phosphate + 2 H(+). It participates in purine metabolism; AMP biosynthesis via de novo pathway; AMP from IMP: step 1/2. In terms of biological role, plays an important role in the de novo pathway of purine nucleotide biosynthesis. Catalyzes the first committed step in the biosynthesis of AMP from IMP. The chain is Adenylosuccinate synthetase from Neisseria gonorrhoeae (strain ATCC 700825 / FA 1090).